The chain runs to 130 residues: Protein ApaG (130 aa).

Positions 3–127 (SAVTRGIEVT…FSLDVPEQRR (125 aa)) constitute an ApaG domain.

The sequence is that of Protein ApaG from Brucella canis (strain ATCC 23365 / NCTC 10854 / RM-666).